The sequence spans 341 residues: tRNA N6-adenosine threonylcarbamoyltransferase (341 aa).

H111 and H115 together coordinate Fe cation. Substrate contacts are provided by residues L134–G138, D167, G180, and N276. D304 is a Fe cation binding site.

The protein belongs to the KAE1 / TsaD family. Fe(2+) serves as cofactor.

The protein localises to the cytoplasm. It catalyses the reaction L-threonylcarbamoyladenylate + adenosine(37) in tRNA = N(6)-L-threonylcarbamoyladenosine(37) in tRNA + AMP + H(+). Its function is as follows. Required for the formation of a threonylcarbamoyl group on adenosine at position 37 (t(6)A37) in tRNAs that read codons beginning with adenine. Is involved in the transfer of the threonylcarbamoyl moiety of threonylcarbamoyl-AMP (TC-AMP) to the N6 group of A37, together with TsaE and TsaB. TsaD likely plays a direct catalytic role in this reaction. In Pseudomonas fluorescens (strain SBW25), this protein is tRNA N6-adenosine threonylcarbamoyltransferase.